Consider the following 774-residue polypeptide: DNA ligase 3 (774 aa).

The tract at residues 1 to 25 (MPPKKRMKNGSSLKSTSKKGEKSRN) is disordered. Lysine 433 serves as the catalytic N6-AMP-lysine intermediate.

Belongs to the ATP-dependent DNA ligase family.

It localises to the nucleus. The catalysed reaction is ATP + (deoxyribonucleotide)n-3'-hydroxyl + 5'-phospho-(deoxyribonucleotide)m = (deoxyribonucleotide)n+m + AMP + diphosphate.. This is DNA ligase 3 (adl1) from Schizosaccharomyces pombe (strain 972 / ATCC 24843) (Fission yeast).